A 191-amino-acid polypeptide reads, in one-letter code: Probable DNA-directed RNA polymerase subunit delta (191 aa).

Residues 14–83 (LSMIEVARAI…GDNKWGLRSW (70 aa)) enclose the HTH HARE-type domain. Acidic residues-rich tracts occupy residues 119–133 (EDAI…EDEN) and 143–191 (YDND…ETND). Positions 119-191 (EDAIDYNDDD…DDDYEDETND (73 aa)) are disordered.

It belongs to the RpoE family. In terms of assembly, RNAP is composed of a core of 2 alpha, a beta and a beta' subunits. The core is associated with a delta subunit and one of several sigma factors.

Its function is as follows. Participates in both the initiation and recycling phases of transcription. In the presence of the delta subunit, RNAP displays an increased specificity of transcription, a decreased affinity for nucleic acids, and an increased efficiency of RNA synthesis because of enhanced recycling. The protein is Probable DNA-directed RNA polymerase subunit delta of Streptococcus thermophilus (strain ATCC BAA-491 / LMD-9).